Here is a 224-residue protein sequence, read N- to C-terminus: Small ribosomal subunit protein uS3 (224 aa).

Residues 38 to 106 form the KH type-2 domain; it reads LREFVKEKLG…EVYLNVVEVR (69 aa).

It belongs to the universal ribosomal protein uS3 family. Part of the 30S ribosomal subunit. Forms a tight complex with proteins S10 and S14.

Binds the lower part of the 30S subunit head. Binds mRNA in the 70S ribosome, positioning it for translation. The protein is Small ribosomal subunit protein uS3 of Anaeromyxobacter dehalogenans (strain 2CP-C).